A 344-amino-acid chain; its full sequence is DNA-directed RNA polymerase subunit alpha (344 aa).

Residues 1 to 246 (MPMERFLKDF…EFLFPLVDFE (246 aa)) form an alpha N-terminal domain (alpha-NTD) region. The alpha C-terminal domain (alpha-CTD) stretch occupies residues 259 to 344 (ESSNLLDMSI…VLSKNVKISE (86 aa)).

The protein belongs to the RNA polymerase alpha chain family. In terms of assembly, homodimer. The RNAP catalytic core consists of 2 alpha, 1 beta, 1 beta' and 1 omega subunit. When a sigma factor is associated with the core the holoenzyme is formed, which can initiate transcription.

The catalysed reaction is RNA(n) + a ribonucleoside 5'-triphosphate = RNA(n+1) + diphosphate. Its function is as follows. DNA-dependent RNA polymerase catalyzes the transcription of DNA into RNA using the four ribonucleoside triphosphates as substrates. This chain is DNA-directed RNA polymerase subunit alpha, found in Borreliella afzelii (strain PKo) (Borrelia afzelii).